A 237-amino-acid chain; its full sequence is tRNA (guanine-N(7)-)-methyltransferase (237 aa).

S-adenosyl-L-methionine is bound by residues Glu-67, Glu-92, Asp-119, and Asp-141. Asp-141 is a catalytic residue. Residues Lys-145, Asp-177, and 214–217 each bind substrate; that span reads TRYE.

It belongs to the class I-like SAM-binding methyltransferase superfamily. TrmB family.

The catalysed reaction is guanosine(46) in tRNA + S-adenosyl-L-methionine = N(7)-methylguanosine(46) in tRNA + S-adenosyl-L-homocysteine. The protein operates within tRNA modification; N(7)-methylguanine-tRNA biosynthesis. Functionally, catalyzes the formation of N(7)-methylguanine at position 46 (m7G46) in tRNA. This is tRNA (guanine-N(7)-)-methyltransferase from Ruegeria pomeroyi (strain ATCC 700808 / DSM 15171 / DSS-3) (Silicibacter pomeroyi).